The primary structure comprises 293 residues: Epimerase family protein SDR39U1 (293 aa).

NADP(+) is bound by residues 31-32 (SR), 58-59 (LA), glutamate 77, arginine 82, and valine 160.

Belongs to the NAD(P)-dependent epimerase/dehydratase family. SDR39U1 subfamily. As to expression, expressed in adrenal gland.

In terms of biological role, putative NADP-dependent oxidoreductase. The chain is Epimerase family protein SDR39U1 (SDR39U1) from Homo sapiens (Human).